We begin with the raw amino-acid sequence, 205 residues long: MTSTRKSVLTSSSTITVTTCLLLVGLAAAGYASEGGEGAHHVDTAKQMKDFAWRCLDFAVLLAIVVWALKKANVKGSLAERQSNIEKMLKEAVEAKEQAEKKFLEYNEKLEQANKEIEAMSAAMKQEGELEKVRIIAEAKAAAEKVKEQAQQAAHQEILKARIELRDEAARLAVEIAEKKIKENITKNDQDKLVGDYISKVVTLH.

A helical transmembrane segment spans residues 51 to 69 (FAWRCLDFAVLLAIVVWAL).

Belongs to the ATPase B chain family. As to quaternary structure, F-type ATPases have 2 components, F(1) - the catalytic core - and F(0) - the membrane proton channel. F(1) has five subunits: alpha(3), beta(3), gamma(1), delta(1), epsilon(1). F(0) has three main subunits: a(1), b(2) and c(10-14). The alpha and beta chains form an alternating ring which encloses part of the gamma chain. F(1) is attached to F(0) by a central stalk formed by the gamma and epsilon chains, while a peripheral stalk is formed by the delta and b chains.

The protein resides in the cell inner membrane. F(1)F(0) ATP synthase produces ATP from ADP in the presence of a proton or sodium gradient. F-type ATPases consist of two structural domains, F(1) containing the extramembraneous catalytic core and F(0) containing the membrane proton channel, linked together by a central stalk and a peripheral stalk. During catalysis, ATP synthesis in the catalytic domain of F(1) is coupled via a rotary mechanism of the central stalk subunits to proton translocation. In terms of biological role, component of the F(0) channel, it forms part of the peripheral stalk, linking F(1) to F(0). In Geotalea uraniireducens (strain Rf4) (Geobacter uraniireducens), this protein is ATP synthase subunit b.